We begin with the raw amino-acid sequence, 379 residues long: MPTVFPHDSVGLVTPQTAHFSEPLALACGRSLPAYDLIYETYGQLNAARSNAVLICHALSGHHHAAGFHSADDRKPGWWDSCIGPGKPIDTNTFFVVSLNNLGGCNGSTGPSSIDPDTGKPLGANFPVVTVEDWVNSQARLADLLGIDTWAAVIGGSLGGMQALQWTISYPDRVRHCLAIASAPKLSAQNIAFNEVARQAILTDPEFHGGSFQERGVIPKRGLMLARMVGHITYLSDDSMGEKFGRGLKSEKLNYDFHSVEFQVESYLRYQGEEFSGRFDANTYLLMTKALDYFDPAANFNDDLAKTFANATAKFCVMSFTTDWRFSPARSRELVDALMAARKDVCYLEIDAPQGHDAFLIPIPRYLQAFGNYMNRISL.

The 310-residue stretch at 51 to 360 (NAVLICHALS…DAPQGHDAFL (310 aa)) folds into the AB hydrolase-1 domain. Serine 157 functions as the Nucleophile in the catalytic mechanism. Arginine 227 lines the substrate pocket. Active-site residues include aspartate 323 and histidine 356. Position 357 (aspartate 357) interacts with substrate.

It belongs to the AB hydrolase superfamily. MetX family. Homodimer.

The protein resides in the cytoplasm. The catalysed reaction is L-homoserine + succinyl-CoA = O-succinyl-L-homoserine + CoA. It functions in the pathway amino-acid biosynthesis; L-methionine biosynthesis via de novo pathway; O-succinyl-L-homoserine from L-homoserine: step 1/1. Transfers a succinyl group from succinyl-CoA to L-homoserine, forming succinyl-L-homoserine. The polypeptide is Homoserine O-succinyltransferase (Pseudomonas savastanoi pv. phaseolicola (strain 1448A / Race 6) (Pseudomonas syringae pv. phaseolicola (strain 1448A / Race 6))).